The chain runs to 610 residues: DNA replication regulator sld2 (610 aa).

The span at Trp28–Ile42 shows a compositional bias: basic and acidic residues. Disordered stretches follow at residues Trp28–Glu115, Ser127–Val261, and Glu338–Arg610. Composition is skewed to polar residues over residues Glu86–Tyr110 and Thr232–Val261. 2 stretches are compositionally biased toward acidic residues: residues Val373 to Ala386 and Phe414 to Leu428. Basic residues predominate over residues Val442–Arg464. The span at Ala470–His480 shows a compositional bias: acidic residues. The segment covering Lys493–Leu503 has biased composition (basic and acidic residues). The span at Glu514–Glu527 shows a compositional bias: acidic residues. Positions Ser544–Lys573 are enriched in basic and acidic residues.

This sequence belongs to the SLD2 family.

The protein localises to the cytoplasm. It is found in the nucleus. Has a role in the initiation of DNA replication. Required at S-phase checkpoint. This Neurospora crassa (strain ATCC 24698 / 74-OR23-1A / CBS 708.71 / DSM 1257 / FGSC 987) protein is DNA replication regulator sld2 (drc-4).